We begin with the raw amino-acid sequence, 91 residues long: Small ribosomal subunit protein uS17 (91 aa).

Belongs to the universal ribosomal protein uS17 family. As to quaternary structure, part of the 30S ribosomal subunit.

Its function is as follows. One of the primary rRNA binding proteins, it binds specifically to the 5'-end of 16S ribosomal RNA. This Salinispora tropica (strain ATCC BAA-916 / DSM 44818 / JCM 13857 / NBRC 105044 / CNB-440) protein is Small ribosomal subunit protein uS17.